Reading from the N-terminus, the 68-residue chain is Large ribosomal subunit protein bL33c (68 aa).

It belongs to the bacterial ribosomal protein bL33 family.

Its subcellular location is the plastid. The protein localises to the chloroplast. This chain is Large ribosomal subunit protein bL33c, found in Nymphaea alba (White water-lily).